The sequence spans 378 residues: Uroporphyrinogen decarboxylase (378 aa).

Substrate contacts are provided by residues 40-44 (RQAGR), D90, Y167, S222, and H355.

This sequence belongs to the uroporphyrinogen decarboxylase family. As to quaternary structure, homodimer.

It is found in the cytoplasm. It catalyses the reaction uroporphyrinogen III + 4 H(+) = coproporphyrinogen III + 4 CO2. It functions in the pathway porphyrin-containing compound metabolism; protoporphyrin-IX biosynthesis; coproporphyrinogen-III from 5-aminolevulinate: step 4/4. Catalyzes the decarboxylation of four acetate groups of uroporphyrinogen-III to yield coproporphyrinogen-III. This chain is Uroporphyrinogen decarboxylase, found in Psychrobacter cryohalolentis (strain ATCC BAA-1226 / DSM 17306 / VKM B-2378 / K5).